The following is a 310-amino-acid chain: Vomeronasal type-1 receptor 47 (310 aa).

The Extracellular portion of the chain corresponds to 1 to 16; sequence MNENSRLHTHSNIRNT. Residues 17-37 form a helical membrane-spanning segment; it reads FFSEIGIGISGNSFLLLFHII. Over 38–49 the chain is Cytoplasmic; it reads KFFRGHRPRLTD. A helical transmembrane segment spans residues 50-70; that stretch reads LPIGLLSLIHLLMLLVAAVIA. Topologically, residues 71–91 are extracellular; sequence TDIFISWRGWNDIICKFLVYL. A disulfide bond links cysteine 85 and cysteine 172. Residues 92–114 traverse the membrane as a helical segment; the sequence is YRSLRGLSLCTTSMLSVLQAIIL. Over 115–131 the chain is Cytoplasmic; sequence SPRSYCLAKFKRKSSHN. A helical transmembrane segment spans residues 132–152; the sequence is ISCAIIFLSVLYMSISSHLFI. Residues 153 to 193 are Extracellular-facing; the sequence is SITATLNLTMNNFLYVSQSCSLLPLSYLMQSMYSTLLVLRE. Residue asparagine 159 is glycosylated (N-linked (GlcNAc...) asparagine). The helical transmembrane segment at 194-214 threads the bilayer; sequence VFLIGLMVLSTSYMVALLCMH. The Cytoplasmic portion of the chain corresponds to 215 to 238; it reads RKQAQNLQGTSLSLKTAPEQRATQ. A helical membrane pass occupies residues 239–259; sequence TILMLMTFFVLMSIFDSIVSS. At 260-269 the chain is on the extracellular side; the sequence is SRAMFLDDST. The helical transmembrane segment at 270 to 290 threads the bilayer; that stretch reads CYSIYIFVMHIYATVSPFVFM. Over 291-310 the chain is Cytoplasmic; sequence STEKHLVNFFRSMCEWIINM.

The protein belongs to the G-protein coupled receptor 1 family.

The protein resides in the cell membrane. In terms of biological role, putative pheromone receptor implicated in the regulation of social and reproductive behavior. This is Vomeronasal type-1 receptor 47 (Vmn1r47) from Mus musculus (Mouse).